The following is a 147-amino-acid chain: Large ribosomal subunit protein bL9 (147 aa).

The protein belongs to the bacterial ribosomal protein bL9 family.

In terms of biological role, binds to the 23S rRNA. The sequence is that of Large ribosomal subunit protein bL9 from Bdellovibrio bacteriovorus (strain ATCC 15356 / DSM 50701 / NCIMB 9529 / HD100).